A 932-amino-acid polypeptide reads, in one-letter code: Protocadherin gamma-A8 (932 aa).

An N-terminal signal peptide occupies residues 1–29 (MAAPQSRPRRGELILLCALLGTLWEIGRG). 6 Cadherin domains span residues 30–133 (QIRY…NPKF), 134–242 (QVED…APVF), 243–347 (PHPI…RPEV), 348–452 (IITS…PPTF), 453–562 (PHAS…APEI), and 570–682 (DGST…KPSV). At 30-692 (QIRYSVPEET…DPNDSSLTLY (663 aa)) the chain is on the extracellular side. An N-linked (GlcNAc...) asparagine glycan is attached at Asn-47. N-linked (GlcNAc...) asparagine glycosylation is found at Asn-414, Asn-419, and Asn-545. Residue Asn-685 is glycosylated (N-linked (GlcNAc...) asparagine). Residues 693-713 (LVVAVAAISCVFLAFVAVLLG) traverse the membrane as a helical segment. The Cytoplasmic portion of the chain corresponds to 714–932 (LRLRRWHKSR…KKKSGKKEKK (219 aa)). 2 disordered regions span residues 804–841 (ADHG…WPNN) and 902–932 (ATLT…KEKK). Residues 810 to 841 (APPNTDWRFSQAQRPGTSGSQNGDDTGTWPNN) are compositionally biased toward polar residues. Positions 922-932 (NKKKSGKKEKK) are enriched in basic residues.

The protein resides in the cell membrane. Its function is as follows. Potential calcium-dependent cell-adhesion protein. May be involved in the establishment and maintenance of specific neuronal connections in the brain. The protein is Protocadherin gamma-A8 (PCDHGA8) of Homo sapiens (Human).